A 913-amino-acid chain; its full sequence is SGGFDFSFLPQPPQEKAGVGLGPGPMGLMGPRGPPGASGAPGPQGFQGPAGEPGEPGQTGPAGARGPAGPPGKAGPGKPGRPGERGVVGPQGARGFPGTPGLPGFKGIRGGQTGARGLPGERGRVGAPGPAGARGSDGSVGPVGPAGPIGSAGPPGFPGAPGPKGELGPVGNTGPGPAGPRGEQGLPGVSGPVGPPGNPGANGLTGAKGAAGLPGVAGAPGLPGPRGIPGPVGASGATGARGLVGEPGPAGSKGESGGKGEPGSAGPQGPPGSSGEEGKRGPNGGSTGPTGPPGLRGGPGSRGLPGADGRAGVIGPAGARGASGPAGVRGPSGDTGRPGEPGLMGARGLPGSPGNVGPAGKEGPAGLPGIDGRPGPIGPAGARGEAGNIGFPGPKGPAGDPGKGAPGPDGNNGAQGPPGLQGVQGGKGTTGEAGKPGERGPGEFGLPGPAGPRGERGPPGESGAVGPSGAIGSRGPSGPPGPDGNKGEPGVVGAPGTAGPAGSGGPGERGAAGIPGGKGEKGETGLRGEVGTTGRDGARGAPGAVGAPGPAGATGDRGEAGAAGPAGPAGPRGSPGERGEVGPAGPNGFAGPAGAAGQPGAKGERGTKGPKGENGIVGPTGPVGSAGPAGPNGPAGPAGSRGDGGPPGVTGFPGAAGRTGPPGPSGITGPPGPPGAAGKEGLRGPRGDQGPVGRTGETGAGGPPGFTGEKGPSGEPGTAGPPGTAGPQGLLGAPGILGLPGSRGERGLPGVAGAVGEPGPLGIGPPGARGPSGAGKHGNRGEPGPVGSVGPVGALGPRGPSGPQGIRGDKGEPGEKGPRGLPGLGLPGLAGQHGDQGPGPVGPAGPRGPAGPSGPPGKDGRTGHPGAVGPAGIRGSQGSQGPSGPPGPPGPPGPPGASGGGYDFGYEGDFYRA.

The disordered stretch occupies residues 1–913; that stretch reads SGGFDFSFLP…FGYEGDFYRA (913 aa). P10, P13, P35, and P41 each carry 4-hydroxyproline. Low complexity-rich tracts occupy residues 28–67, 125–154, and 199–220; these read LMGP…ARGP, VGAP…SAGP, and PGAN…AGAP. Residues 254–263 show a composition bias toward gly residues; sequence GESGGKGEPG. Positions 264-274 are enriched in low complexity; sequence SAGPQGPPGSS. Residues 281–303 are compositionally biased toward gly residues; that stretch reads GPNGGSTGPTGPPGLRGGPGSRG. Low complexity predominate over residues 316–332; it reads PAGARGASGPAGVRGPS. P338 and P341 each carry 4-hydroxyproline. 2 stretches are compositionally biased toward low complexity: residues 367–386 and 408–421; these read LPGI…RGEA and PDGN…PGLQ. Gly residues predominate over residues 422–431; the sequence is GVQGGKGTTG. Low complexity-rich tracts occupy residues 459–476 and 488–498; these read PGES…SRGP and EPGVVGAPGTA. Residues 499 to 517 show a composition bias toward gly residues; it reads GPAGSGGPGERGAAGIPGG. Low complexity-rich tracts occupy residues 527 to 574 and 581 to 601; these read RGEV…PRGS and VGPA…QPGA. Residues 602-611 show a composition bias toward basic and acidic residues; sequence KGERGTKGPK. Positions 619–629 are enriched in low complexity; that stretch reads PTGPVGSAGPA. Residues 639–648 are compositionally biased toward gly residues; that stretch reads GSRGDGGPPG. The segment covering 650–659 has biased composition (low complexity); it reads TGFPGAAGRT. Residues 696-705 are compositionally biased toward gly residues; the sequence is GETGAGGPPG. Composition is skewed to low complexity over residues 713–740 and 748–758; these read SGEP…LGLP and LPGVAGAVGEP. The segment covering 759–776 has biased composition (gly residues); that stretch reads GPLGIGPPGARGPSGAGK. Residues 782 to 797 are compositionally biased toward low complexity; sequence EPGPVGSVGPVGALGP. Basic and acidic residues predominate over residues 807–818; it reads RGDKGEPGEKGP. A compositionally biased stretch (pro residues) spans 883–895; it reads SGPPGPPGPPGPP.

This sequence belongs to the fibrillar collagen family. Trimers of one alpha 2(I) and two alpha 1(I) chains. Interacts (via C-terminus) with TMEM131 (via PapD-L domain); the interaction is direct and is involved in assembly and TRAPPIII ER-to-Golgi transport complex-dependent secretion of collagen. Post-translationally, prolines at the third position of the tripeptide repeating unit (G-X-Y) are hydroxylated in some or all of the chains. Expressed in bones.

The protein resides in the secreted. Its subcellular location is the extracellular space. It localises to the extracellular matrix. Functionally, type I collagen is a member of group I collagen (fibrillar forming collagen). In Parocnus serus (Greater Haitian ground sloth), this protein is Collagen alpha-2(I) chain.